Consider the following 554-residue polypeptide: Urocanate hydratase (554 aa).

NAD(+) contacts are provided by residues 50-51 (GG), Gln128, 174-176 (GMG), Glu194, Arg199, 240-241 (NA), 261-265 (QTSAH), 271-272 (YI), and Tyr320. Cys408 is a catalytic residue. Residue Gly490 coordinates NAD(+).

It belongs to the urocanase family. NAD(+) is required as a cofactor.

It localises to the cytoplasm. It carries out the reaction 4-imidazolone-5-propanoate = trans-urocanate + H2O. It participates in amino-acid degradation; L-histidine degradation into L-glutamate; N-formimidoyl-L-glutamate from L-histidine: step 2/3. Functionally, catalyzes the conversion of urocanate to 4-imidazolone-5-propionate. The sequence is that of Urocanate hydratase from Rubrobacter xylanophilus (strain DSM 9941 / JCM 11954 / NBRC 16129 / PRD-1).